The following is a 132-amino-acid chain: Small ribosomal subunit protein uS8 (132 aa).

This sequence belongs to the universal ribosomal protein uS8 family. In terms of assembly, part of the 30S ribosomal subunit. Contacts proteins S5 and S12.

Its function is as follows. One of the primary rRNA binding proteins, it binds directly to 16S rRNA central domain where it helps coordinate assembly of the platform of the 30S subunit. This Brucella anthropi (strain ATCC 49188 / DSM 6882 / CCUG 24695 / JCM 21032 / LMG 3331 / NBRC 15819 / NCTC 12168 / Alc 37) (Ochrobactrum anthropi) protein is Small ribosomal subunit protein uS8.